We begin with the raw amino-acid sequence, 87 residues long: Toxin RelG (87 aa).

The protein belongs to the RelE toxin family. Interacts with cognate antitoxin RelF, which neutralizes the toxin. Also interacts with non-cognate antitoxin RelB in vitro, in M.smegmatis this neutralizes the toxicity of this toxin.

Toxic component of a type II toxin-antitoxin (TA) system. Has RNase activity and preferentially cleaves at the 3'-end of purine ribonucleotides. Overexpression in M.tuberculosis or M.smegmatis inhibits colony formation in a bacteriostatic rather than bacteriocidal fashion. Its toxic effect is neutralized by coexpression with cognate antitoxin RelB2 (shown only for M.smegmatis). Overexpression also increases the number of gentamicin-tolerant and levofloxacin-tolerant persister cells. Functionally, in combination with cognate antitoxin RelF represses its own promoter. Has been seen to bind DNA in complex with antitoxin RelF but not alone. The chain is Toxin RelG (relG) from Mycobacterium tuberculosis (strain ATCC 25618 / H37Rv).